Reading from the N-terminus, the 908-residue chain is PTS system glucose-specific EIICBA component (908 aa).

Residues methionine 1–glycine 264 form the PTS EIIC type-1; first part domain. 5 helical membrane passes run leucine 31–isoleucine 51, glycine 71–phenylalanine 91, phenylalanine 100–valine 120, valine 155–isoleucine 175, and phenylalanine 189–tryptophan 209. The interval glycine 265–serine 450 is unknown. A PTS EIIC type-1; second part domain is found at leucine 451–glycine 602. Transmembrane regions (helical) follow at residues glycine 459 to alanine 479, alanine 487 to phenylalanine 507, phenylalanine 509 to valine 529, leucine 536 to glycine 556, and valine 571 to isoleucine 591. The region spanning glutamine 631–tryptophan 713 is the PTS EIIB type-1 domain. The active-site Phosphocysteine intermediate; for EIIB activity is cysteine 653. The PTS EIIA type-1 domain maps to aspartate 762 to glutamine 875. The Tele-phosphohistidine intermediate; for EIIA activity role is filled by histidine 815.

It localises to the cell membrane. It carries out the reaction N(pros)-phospho-L-histidyl-[protein] + D-glucose(out) = D-glucose 6-phosphate(in) + L-histidyl-[protein]. In terms of biological role, the phosphoenolpyruvate-dependent sugar phosphotransferase system (sugar PTS), a major carbohydrate active transport system, catalyzes the phosphorylation of incoming sugar substrates concomitantly with their translocation across the cell membrane. This system is involved in glucose transport. The sequence is that of PTS system glucose-specific EIICBA component (ptsG) from Mycoplasma genitalium (strain ATCC 33530 / DSM 19775 / NCTC 10195 / G37) (Mycoplasmoides genitalium).